Reading from the N-terminus, the 477-residue chain is Stromelysin-1 (477 aa).

Residues 1–17 form the signal peptide; sequence MKSLPILLLLCVAVCSA. A propeptide spans 18-99 (activation peptide); sequence YPLDGAARGE…PRCGVPDVGH (82 aa). Positions 90-97 match the Cysteine switch motif; the sequence is PRCGVPDV. Cys-92 contributes to the Zn(2+) binding site. 2 residues coordinate Ca(2+): Asp-124 and Asp-158. Zn(2+) is bound by residues His-168 and Asp-170. Ca(2+) contacts are provided by Asp-175, Gly-176, Gly-178, and Val-180. His-183 serves as a coordination point for Zn(2+). Positions 190, 192, and 194 each coordinate Ca(2+). Residue His-196 participates in Zn(2+) binding. Positions 198, 199, and 201 each coordinate Ca(2+). His-218 lines the Zn(2+) pocket. The active site involves Glu-219. Positions 222 and 228 each coordinate Zn(2+). The tract at residues 262 to 287 is disordered; that stretch reads LYGPPPDSPETPLVPTEPVPPEPGTP. Over residues 276 to 285 the composition is skewed to pro residues; sequence PTEPVPPEPG. 4 Hemopexin repeats span residues 287–336, 337–383, 385–433, and 434–477; these read PANC…WPSL, PSGV…GFPP, VRKI…FPGI, and DSKI…WLNC. Residues Cys-290 and Cys-477 are joined by a disulfide bond. Asp-297 lines the Ca(2+) pocket. Ca(2+)-binding residues include Asp-389 and Asp-438.

This sequence belongs to the peptidase M10A family. It depends on Ca(2+) as a cofactor. Requires Zn(2+) as cofactor. In terms of processing, directly cleaved by HTRA2 to produce active form.

Its subcellular location is the secreted. It is found in the extracellular space. It localises to the extracellular matrix. The protein resides in the nucleus. The protein localises to the cytoplasm. The catalysed reaction is Preferential cleavage where P1', P2' and P3' are hydrophobic residues.. Its activity is regulated as follows. Enzymatic activity is activated by HTRA2 in dopaminergic cells upon mitochondrial stress. Metalloproteinase with a rather broad substrate specificity that can degrade fibronectin, laminin, gelatins of type I, III, IV, and V; collagens III, IV, X, and IX, and cartilage proteoglycans. Activates different molecules including growth factors, plasminogen or other matrix metalloproteinases such as MMP9. Once released into the extracellular matrix (ECM), the inactive pro-enzyme is activated by the plasmin cascade signaling pathway. Also acts intracellularly. For example, in dopaminergic neurons, gets activated by the serine protease HTRA2 upon stress and plays a pivotal role in DA neuronal degeneration by mediating microglial activation and alpha-synuclein/SNCA cleavage. In addition, plays a role in immune response and possesses antiviral activity against various viruses such as vesicular stomatitis virus, influenza A virus (H1N1) and human herpes virus 1. Mechanistically, translocates from the cytoplasm into the cell nucleus upon virus infection to influence NF-kappa-B activities. This Homo sapiens (Human) protein is Stromelysin-1 (MMP3).